The chain runs to 115 residues: Aspartate 1-decarboxylase (115 aa).

The Schiff-base intermediate with substrate; via pyruvic acid role is filled by S25. At S25 the chain carries Pyruvic acid (Ser). T57 contacts substrate. Catalysis depends on Y58, which acts as the Proton donor. 72–74 (GAA) lines the substrate pocket.

This sequence belongs to the PanD family. Heterooctamer of four alpha and four beta subunits. It depends on pyruvate as a cofactor. In terms of processing, is synthesized initially as an inactive proenzyme, which is activated by self-cleavage at a specific serine bond to produce a beta-subunit with a hydroxyl group at its C-terminus and an alpha-subunit with a pyruvoyl group at its N-terminus.

The protein resides in the cytoplasm. It catalyses the reaction L-aspartate + H(+) = beta-alanine + CO2. The protein operates within cofactor biosynthesis; (R)-pantothenate biosynthesis; beta-alanine from L-aspartate: step 1/1. Its function is as follows. Catalyzes the pyruvoyl-dependent decarboxylation of aspartate to produce beta-alanine. The protein is Aspartate 1-decarboxylase of Campylobacter fetus subsp. fetus (strain 82-40).